Reading from the N-terminus, the 140-residue chain is uncharacterized protein (140 aa).

The next 2 helical transmembrane spans lie at 26 to 43 and 64 to 86; these read YLDL…TGVI and LLNF…NGVL.

It belongs to the bacteriophage holin family. Cp-1 holin subfamily.

It is found in the cell membrane. This is an uncharacterized protein from Bacillus subtilis (strain 168).